The primary structure comprises 673 residues: DNA ligase (673 aa).

NAD(+) is bound by residues 33-37 (DYEYD), 82-83 (SL), and glutamate 113. Lysine 115 (N6-AMP-lysine intermediate) is an active-site residue. Arginine 136, glutamate 170, lysine 285, and lysine 309 together coordinate NAD(+). Zn(2+)-binding residues include cysteine 403, cysteine 406, cysteine 421, and cysteine 426. Positions 583-672 (AKSDILKGYT…SHEEVEKILM (90 aa)) constitute a BRCT domain.

This sequence belongs to the NAD-dependent DNA ligase family. LigA subfamily. Mg(2+) serves as cofactor. The cofactor is Mn(2+).

The catalysed reaction is NAD(+) + (deoxyribonucleotide)n-3'-hydroxyl + 5'-phospho-(deoxyribonucleotide)m = (deoxyribonucleotide)n+m + AMP + beta-nicotinamide D-nucleotide.. Its function is as follows. DNA ligase that catalyzes the formation of phosphodiester linkages between 5'-phosphoryl and 3'-hydroxyl groups in double-stranded DNA using NAD as a coenzyme and as the energy source for the reaction. It is essential for DNA replication and repair of damaged DNA. This chain is DNA ligase, found in Caldicellulosiruptor saccharolyticus (strain ATCC 43494 / DSM 8903 / Tp8T 6331).